The following is a 105-amino-acid chain: MLVGYIFLTIAICSESIGAAMLKVSDGFKKWKPSALVVIAYSLAFYMLSLTLNHIPLSLSYATWSGVGTVLTAVIGVKWFKEELNAKGLIGILLLISGVVLLNWQ.

4 helical membrane-spanning segments follow: residues 2 to 22 (LVGY…AAML), 35 to 55 (ALVV…LNHI), 57 to 77 (LSLS…VIGV), and 84 to 104 (LNAK…LLNW).

Belongs to the drug/metabolite transporter (DMT) superfamily. Small multidrug resistance (SMR) (TC 2.A.7.1) family. EbrA/EbrB subfamily. In terms of assembly, the efflux pump is composed of EbrA and EbrB.

The protein resides in the cell membrane. In terms of biological role, part of a multidrug efflux pump. Confers resistance to cationic lipophilic dyes such as ethidium bromide, acriflavine, pyronine Y and safranin O. The efflux is probably coupled to an influx of protons. In Bacillus atrophaeus, this protein is Multidrug resistance protein EbrA (ebrA).